The following is a 3460-amino-acid chain: Reelin (3460 aa).

An N-terminal signal peptide occupies residues 1–25 (MERSGWARQTFLLALLLGATLRARA). A Reelin domain is found at 26-190 (AAGYYPRFSP…GAPTDVTVHP (165 aa)). Cysteine 40 and cysteine 126 are disulfide-bonded. Asparagine 140 carries N-linked (GlcNAc...) asparagine glycosylation. Residues cysteine 154 and cysteine 178 are joined by a disulfide bond. Residues asparagine 257, asparagine 289, and asparagine 305 are each glycosylated (N-linked (GlcNAc...) asparagine). Cysteine 539 and cysteine 580 form a disulfide bridge. One copy of the BNR 1 repeat lies at 592 to 603 (EFSTNHGRSWSL). Cysteines 608 and 613 form a disulfide. Residue asparagine 628 is glycosylated (N-linked (GlcNAc...) asparagine). Residues 670–701 (IGPSCLKFCSGRGQCTRHGCKCDPGFSGPACE) form the EGF-like 1 domain. 2 cysteine pairs are disulfide-bonded: cysteine 674–cysteine 684 and cysteine 691–cysteine 700. The stretch at 798–809 (HYSYDNGITWKL) is one BNR 2 repeat. An intrachain disulfide couples cysteine 894 to cysteine 936. One copy of the BNR 3 repeat lies at 951 to 962 (EYSTNHGLTWHL). Disulfide bonds link cysteine 967–cysteine 974, cysteine 1033–cysteine 1043, and cysteine 1050–cysteine 1059. The EGF-like 2 domain occupies 1029–1060 (IGQQCPNMCSGHGSCDHGICRCDQGYQGTECH). A BNR 4 repeat occupies 1156 to 1167 (QYSNNGGIQWHL). A glycan (N-linked (GlcNAc...) asparagine) is linked at asparagine 1266. A disulfide bridge connects residues cysteine 1270 and cysteine 1309. Residues 1322-1333 (QYSHDAGMSWFL) form a BNR 5 repeat. A disulfide bridge links cysteine 1338 with cysteine 1347. Positions 1408–1441 (ISEPCPSYCSGHGDCISGVCFCDLGYTAAQGTCV) constitute an EGF-like 3 domain. A BNR 6 repeat occupies 1534-1545 (QYSNDNGILWHL). Asparagine 1599 is a glycosylation site (N-linked (GlcNAc...) asparagine). The cysteines at positions 1632 and 1672 are disulfide-linked. One copy of the BNR 7 repeat lies at 1685-1696 (QYSLNNGKDWHL). A disulfide bridge links cysteine 1701 with cysteine 1708. N-linked (GlcNAc...) asparagine glycosylation occurs at asparagine 1749. One can recognise an EGF-like 4 domain in the interval 1764–1795 (LASGCPWMCSGRGICDAGRCVCDRGFGGPYCV). One copy of the BNR 8 repeat lies at 1883–1894 (QFSISGGITWHL). The N-linked (GlcNAc...) asparagine glycan is linked to asparagine 1920. Residues 2042-2053 (EFSRDFGATWHL) form a BNR 9 repeat. The Zn(2+) site is built by histidine 2060 and histidine 2073. The 33-residue stretch at 2128–2160 (IGPQCEEMCNGQGSCINGTKCICDPGYSGPTCK) folds into the EGF-like 5 domain. Disulfide bonds link cysteine 2132-cysteine 2142, cysteine 2136-cysteine 2148, and cysteine 2150-cysteine 2159. N-linked (GlcNAc...) asparagine glycosylation occurs at asparagine 2144. Glutamate 2178 is a binding site for Zn(2+). The cysteines at positions 2194 and 2234 are disulfide-linked. The stretch at 2249-2260 (QYSLNGGLSWSL) is one BNR 10 repeat. Glutamate 2263 is a binding site for Zn(2+). Asparagine 2268 and asparagine 2316 each carry an N-linked (GlcNAc...) asparagine glycan. 3 cysteine pairs are disulfide-bonded: cysteine 2347–cysteine 2386, cysteine 2392–cysteine 2558, and cysteine 2543–cysteine 2583. Residues glutamate 2396, glutamate 2398, and histidine 2459 each contribute to the Zn(2+) site. Residues 2398 to 2409 (EYSVDLGLSWHP) form a BNR 11 repeat. Residues 2477-2508 (IGDGCIDMCSGHGRCIQGNCVCDEQWGGLYCD) form the EGF-like 6 domain. Residue asparagine 2568 is glycosylated (N-linked (GlcNAc...) asparagine). BNR repeat units follow at residues 2597–2608 (EYSVNGGITWNL) and 2777–2788 (QYSTDFGVSWNY). Disulfide bonds link cysteine 2793/cysteine 2800, cysteine 2856/cysteine 2866, cysteine 2860/cysteine 2871, cysteine 2873/cysteine 2882, and cysteine 2918/cysteine 2965. The EGF-like 7 domain occupies 2852–2883 (LGPGCLDNCRGHGDCLREQCICDPGYSGPNCY). Asparagine 2961 carries an N-linked (GlcNAc...) asparagine glycan. The BNR 14 repeat unit spans residues 2978–2989 (DYSTDGGITWTL). N-linked (GlcNAc...) asparagine glycans are attached at residues asparagine 3015 and asparagine 3072. The stretch at 3142–3154 (EYTKDARSDSWQL) is one BNR 15 repeat. Cysteine 3159 and cysteine 3169 form a disulfide bridge. N-linked (GlcNAc...) asparagine glycosylation is present at asparagine 3184. Residues 3227 to 3259 (IGEACPKLCSGHGYCTTGAICICDESFQGDDCS) enclose the EGF-like 8 domain. 4 disulfides stabilise this stretch: cysteine 3231-cysteine 3241, cysteine 3235-cysteine 3247, cysteine 3249-cysteine 3258, and cysteine 3295-cysteine 3345. One copy of the BNR 16 repeat lies at 3362-3373 (QYSVNNGITWHV). N-linked (GlcNAc...) asparagine glycans are attached at residues asparagine 3411 and asparagine 3438.

This sequence belongs to the reelin family. In terms of assembly, oligomer of disulfide-linked homodimers. Post-translationally, N-glycosylated and to a lesser extent also O-glycosylated. As to expression, abundantly produced during brain ontogenesis by the Cajal-Retzius cells and other pioneer neurons located in the telencephalic marginal zone and by granule cells of the external granular layer of the cerebellum. In adult brain, preferentially expressed in GABAergic interneurons of prefrontal cortices, temporal cortex, hippocampus and glutamatergic granule cells of cerebellum. Expression is reduced to about 50% in patients with schizophrenia. Also expressed in fetal and adult liver.

The protein localises to the secreted. The protein resides in the extracellular space. Its subcellular location is the extracellular matrix. Its function is as follows. Extracellular matrix serine protease secreted by pioneer neurons that plays a role in layering of neurons in the cerebral cortex and cerebellum by coordinating cell positioning during neurodevelopment. Regulates microtubule function in neurons and neuronal migration. Binding to the extracellular domains of lipoprotein receptors VLDLR and LRP8/APOER2 induces tyrosine phosphorylation of DAB1 and modulation of TAU phosphorylation. Affects migration of sympathetic preganglionic neurons in the spinal cord, where it seems to act as a barrier to neuronal migration. Enzymatic activity is important for the modulation of cell adhesion. The polypeptide is Reelin (RELN) (Homo sapiens (Human)).